A 902-amino-acid chain; its full sequence is DNA mismatch repair protein MutS (902 aa).

654 to 661 (GPNMGGKS) lines the ATP pocket.

It belongs to the DNA mismatch repair MutS family.

Its function is as follows. This protein is involved in the repair of mismatches in DNA. It is possible that it carries out the mismatch recognition step. This protein has a weak ATPase activity. This is DNA mismatch repair protein MutS from Xanthomonas axonopodis pv. citri (strain 306).